A 2346-amino-acid polypeptide reads, in one-letter code: MDEPSPLAQPLELNQHSRFIIGSVSEDNSEDEISNLVKLDLLEEKEGSLSPASVGSDTLSDLGISSLQDGLALHIRSSMSGLHLVKQGRDRKKIDSQRDFTVASPAEFVTRFGGNKVIEKVLIANNGIAAVKCMRSIRRWSYEMFRNERAIRFVVMVTPEDLKANAEYIKMADHYVPVPGGPNNNNYANVELILDIAKRIPVQAVWAGWGHASENPKLPELLLKNGIAFMGPPSQAMWALGDKIASSIVAQTAGIPTLPWSGSGLRVDWQENDFSKRILNVPQELYEKGYVKDVDDGLQAAEEVGYPVMIKASEGGGGKGIRKVNNADDFPNLFRQVQAEVPGSPIFVMRLAKQSRHLEVQILADQYGNAISLFGRDCSVQRRHQKIIEEAPATIATPAVFEHMEQCAVKLAKMVGYVSAGTVEYLYSQDGSFYFLELNPRLQVEHPCTEMVADVNLPAAQLQIAMGIPLYRIKDIRMMYGVSPWGDSPIDFEDSAHVPCPRGHVIAARITSENPDEGFKPSSGTVQELNFRSNKNVWGYFSVAAAGGLHEFADSQFGHCFSWGENREEAISNMVVALKELSIRGDFRTTVEYLIKLLETESFQMNRIDTGWLDRLIAEKVQAERPDTMLGVVCGALHVADVSLRNSVSNFLHSLERGQVLPAHTLLNTVDVELIYEGVKYVLKVTRQSPNSYVVIMNGSCVEVDVHRLSDGGLLLSYDGSSYTTYMKEEVDRYRITIGNKTCVFEKENDPSVMRSPSAGKLIQYIVEDGGHVFAGQCYAEIEVMKMVMTLTAVESGCIHYVKRPGAALDPGCVLAKMQLDNPSKVQQAELHTGSLPRIQSTALRGEKLHRVFHYVLDNLVNVMNGYCLPDPFFSSKVKDWVERLMKTLRDPSLPLLELQDIMTSVSGRIPPNVEKSIKKEMAQYASNITSVLCQFPSQQIANILDSHAATLNRKSEREVFFMNTQSIVQLVQRYRSGIRGHMKAVVMDLLRQYLRVETQFQNGHYDKCVFALREENKSDMNTVLNYIFSHAQVTKKNLLVTMLIDQLCGRDPTLTDELLNILTELTQLSKTTNAKVALRARQVLIASHLPSYELRHNQVESIFLSAIDMYGHQFCIENLQKLILSETSIFDVLPNFFYHSNQVVRMAALEVYVRRAYIAYELNSVQHRQLKDNTCVVEFQFMLPTSHPNRGNIPTLNRMSFSSNLNHYGMTHVASVSDVLLDNSFTPPCQRMGGMVSFRTFEDFVRIFDEVMGCFSDSPPQSPTFPEAGHTSLYDEDKVPRDEPIHILNVAIKTDCDIEDDRLAAMFREFTQQNKATLVDHGIRRLTFLVAQKDFRKQVNYEVDRRFHREFPKFFTFRARDKFEEDRIYRHLEPALAFQLELNRMRNFDLTAIPCANHKMHLYLGAAKVEVGTEVTDYRFFVRAIIRHSDLVTKEASFEYLQNEGERLLLEAMDELEVAFNNTNVRTDCNHIFLNFVPTVIMDPSKIEESVRSMVMRYGSRLWKLRVLQAELKINIRLTPTGKAIPIRLFLTNESGYYLDISLYKEVTDSRTAQIMFQAYGDKQGPLHGMLINTPYVTKDLLQSKRFQAQSLGTTYIYDIPEMFRQSLIKLWESMSTQAFLPSPPLPSDMLTYTELVLDDQGQLVHMNRLPGGNEIGMVAWKMTFKSPEYPEGRDIIVIGNDITYRIGSFGPQEDLLFLRASELARAEGIPRIYVSANSGARIGLAEEIRHMFHVAWVDPEDPYKGYRYLYLTPQDYKRVSALNSVHCEHVEDEGESRYKITDIIGKEEGIGPENLRGSGMIAGESSLAYNEIITISLVTCRAIGIGAYLVRLGQRTIQVENSHLILTGAGALNKVLGREVYTSNNQLGGIQIMHNNGVTHCTVCDDFEGVFTVLHWLSYMPKSVHSSVPLLNSKDPIDRIIEFVPTKTPYDPRWMLAGRPHPTQKGQWLSGFFDYGSFSEIMQPWAQTVVVGRARLGGIPVGVVAVETRTVELSIPADPANLDSEAKIIQQAGQVWFPDSAFKTYQAIKDFNREGLPLMVFANWRGFSGGMKDMYDQVLKFGAYIVDGLRECCQPVLVYIPPQAELRGGSWVVIDSSINPRHMEMYADRESRGSVLEPEGTVEIKFRRKDLVKTMRRVDPVYIHLAERLGTPELSTAERKELENKLKEREEFLIPIYHQVAVQFADLHDTPGRMQEKGVISDILDWKTSRTFFYWRLRRLLLEDLVKKKIHNANPELTDGQIQAMLRRWFVEVEGTVKAYVWDNNKDLAEWLEKQLTEEDGVHSVIEENIKCISRDYVLKQIRSLVQANPEVAMDSIIHMTQHISPTQRAEVIRILSTMDSPST.

Met-1 bears the N-acetylmethionine mark. Residues Ser-5, Ser-23, Ser-25, Ser-29, Ser-34, Ser-48, Ser-50, and Ser-53 each carry the phosphoserine modification. Position 58 is a phosphothreonine (Thr-58). 2 positions are modified to phosphoserine: Ser-78 and Ser-80. A Biotin carboxylation domain is found at 117–618 (VIEKVLIANN…DTGWLDRLIA (502 aa)). The region spanning 275–466 (SKRILNVPQE…LPAAQLQIAM (192 aa)) is the ATP-grasp domain. ATP is bound at residue 315–320 (GGGGKG). Residues Glu-424, Glu-437, and Asn-439 each contribute to the Mg(2+) site. Mn(2+) is bound by residues Glu-424, Glu-437, and Asn-439. Arg-441 is an active-site residue. Residue Ser-488 is modified to Phosphoserine. A Phosphothreonine modification is found at Thr-610. A Biotinyl-binding domain is found at 745-819 (FEKENDPSVM…DPGCVLAKMQ (75 aa)). Lys-786 is subject to N6-biotinyllysine. Residues Ser-835, Ser-1201, Ser-1216, and Ser-1218 each carry the phosphoserine modification. Thr-1227 carries the phosphothreonine modification. 3 positions are modified to phosphoserine: Ser-1259, Ser-1263, and Ser-1273. Residue Lys-1334 is modified to N6-acetyllysine. The 339-residue stretch at 1576–1914 (PYVTKDLLQS…SVHSSVPLLN (339 aa)) folds into the CoA carboxyltransferase N-terminal domain. Residues 1576–2234 (PYVTKDLLQS…EDLVKKKIHN (659 aa)) are carboxyltransferase. 3 residues coordinate CoA: Arg-1823, Lys-2127, and Arg-2129. In terms of domain architecture, CoA carboxyltransferase C-terminal spans 1918–2234 (PIDRIIEFVP…EDLVKKKIHN (317 aa)). The residue at position 2153 (Thr-2153) is a Phosphothreonine.

As to quaternary structure, monomer, homodimer, and homotetramer. Can form filamentous polymers. Interacts in its inactive phosphorylated form with the BRCT domains of BRCA1 which prevents ACACA dephosphorylation and inhibits lipid synthesis. Interacts with MID1IP1; interaction with MID1IP1 promotes oligomerization and increases its activity. Mg(2+) serves as cofactor. Mn(2+) is required as a cofactor. The cofactor is biotin. Phosphorylation on Ser-1263 is required for interaction with BRCA1. Post-translationally, phosphorylation at Ser-80 by AMPK inactivates enzyme activity. In terms of processing, the biotin cofactor is covalently attached to the central biotinyl-binding domain and is required for the catalytic activity. In terms of tissue distribution, expressed in brain, placenta, skeletal muscle, renal, pancreatic and adipose tissues; expressed at low level in pulmonary tissue; not detected in the liver.

It localises to the cytoplasm. Its subcellular location is the cytosol. It carries out the reaction hydrogencarbonate + acetyl-CoA + ATP = malonyl-CoA + ADP + phosphate + H(+). The protein operates within lipid metabolism; malonyl-CoA biosynthesis; malonyl-CoA from acetyl-CoA: step 1/1. With respect to regulation, inhibited by phosphorylation. Citrate promotes oligomerization of the protein into filaments that correspond to the most active form of the carboxylase. Inhibited by palmitoyl-CoA. Functionally, cytosolic enzyme that catalyzes the carboxylation of acetyl-CoA to malonyl-CoA, the first and rate-limiting step of de novo fatty acid biosynthesis. This is a 2 steps reaction starting with the ATP-dependent carboxylation of the biotin carried by the biotin carboxyl carrier (BCC) domain followed by the transfer of the carboxyl group from carboxylated biotin to acetyl-CoA. The protein is Acetyl-CoA carboxylase 1 of Homo sapiens (Human).